A 420-amino-acid polypeptide reads, in one-letter code: Gamma-glutamyl phosphate reductase (420 aa).

Belongs to the gamma-glutamyl phosphate reductase family.

It localises to the cytoplasm. It carries out the reaction L-glutamate 5-semialdehyde + phosphate + NADP(+) = L-glutamyl 5-phosphate + NADPH + H(+). It functions in the pathway amino-acid biosynthesis; L-proline biosynthesis; L-glutamate 5-semialdehyde from L-glutamate: step 2/2. In terms of biological role, catalyzes the NADPH-dependent reduction of L-glutamate 5-phosphate into L-glutamate 5-semialdehyde and phosphate. The product spontaneously undergoes cyclization to form 1-pyrroline-5-carboxylate. This is Gamma-glutamyl phosphate reductase from Chlorobaculum parvum (strain DSM 263 / NCIMB 8327) (Chlorobium vibrioforme subsp. thiosulfatophilum).